The chain runs to 819 residues: Metabotropic glutamate receptor-like protein O (819 aa).

The first 19 residues, 1–19, serve as a signal peptide directing secretion; sequence MKKVFFLILILNCVVGALS. Residues 20 to 394 lie on the Extracellular side of the membrane; the sequence is NKNICKISLL…FVDSYSNSIK (375 aa). Residues Asn-99, Asn-185, Asn-277, Asn-295, Asn-330, and Asn-370 are each glycosylated (N-linked (GlcNAc...) asparagine). A helical membrane pass occupies residues 395-415; sequence ISILSVSIFCIFICVLGMIFI. Topologically, residues 416-428 are cytoplasmic; sequence TVLRNARILKSSS. The chain crosses the membrane as a helical span at residues 429–449; sequence PSFLLLILFGCIVIFTGCILF. Residues 450-457 lie on the Extracellular side of the membrane; it reads SQPATDKT. The helical transmembrane segment at 458–478 threads the bilayer; that stretch reads CQGRVWLLSIGYTIFLGSLLI. Residues 479-503 lie on the Cytoplasmic side of the membrane; that stretch reads KNWRVWLLFDNKKLRKRSITNWKLY. A helical membrane pass occupies residues 504–524; it reads PWVAGILVVDVLILALWQGLG. Topologically, residues 525–550 are extracellular; it reads DIKSESRIIGTSFYQYTNVCTNNDQG. The chain crosses the membrane as a helical span at residues 551 to 571; that stretch reads SIALYILLAFHGLKLLGTCFI. The Cytoplasmic segment spans residues 572–587; sequence SFKIKLVDIEEFNESK. A helical membrane pass occupies residues 588-608; that stretch reads PITTSVFIILFCIFTIILLIA. Residues 609–624 are Extracellular-facing; the sequence is PSSSSSSASSPQPIAS. Residues 625–645 form a helical membrane-spanning segment; it reads LETIICICSVTTTAISIGLLF. The Cytoplasmic portion of the chain corresponds to 646–819; it reads GDKIYFITTQ…NNENEIISDT (174 aa). The disordered stretch occupies residues 674-819; sequence KDCDDDDDDS…NNENEIISDT (146 aa). Residues 695–712 show a composition bias toward basic residues; that stretch reads NKNKNKNRNQSEKKKRPN. Positions 726–739 are enriched in polar residues; the sequence is ESVVFNPPSNNDLT. Residues 748-768 show a composition bias toward basic and acidic residues; sequence GIKEGHGHDSENNDEYEHHED. Acidic residues predominate over residues 769 to 798; that stretch reads EDHEYEGEGEDEDHEDEYEVENDIEQEQEQ. A compositionally biased stretch (low complexity) spans 799–808; sequence ESSNISISTK.

This sequence in the N-terminal section; belongs to the BMP lipoprotein family. In the C-terminal section; belongs to the G-protein coupled receptor 3 family. GABA-B receptor subfamily.

Its subcellular location is the membrane. This chain is Metabotropic glutamate receptor-like protein O (grlO), found in Dictyostelium discoideum (Social amoeba).